Consider the following 407-residue polypeptide: Arginine deiminase (407 aa).

Cysteine 397 serves as the catalytic Amidino-cysteine intermediate.

Belongs to the arginine deiminase family.

Its subcellular location is the cytoplasm. It catalyses the reaction L-arginine + H2O = L-citrulline + NH4(+). It participates in amino-acid degradation; L-arginine degradation via ADI pathway; carbamoyl phosphate from L-arginine: step 1/2. The polypeptide is Arginine deiminase (arcA) (Escherichia coli O6:H1 (strain CFT073 / ATCC 700928 / UPEC)).